The following is a 182-amino-acid chain: ATP-dependent protease subunit HslV (182 aa).

Residue Thr12 is part of the active site. Na(+)-binding residues include Ala167, Cys170, and Thr173.

Belongs to the peptidase T1B family. HslV subfamily. In terms of assembly, a double ring-shaped homohexamer of HslV is capped on each side by a ring-shaped HslU homohexamer. The assembly of the HslU/HslV complex is dependent on binding of ATP.

Its subcellular location is the cytoplasm. It catalyses the reaction ATP-dependent cleavage of peptide bonds with broad specificity.. Its activity is regulated as follows. Allosterically activated by HslU binding. In terms of biological role, protease subunit of a proteasome-like degradation complex believed to be a general protein degrading machinery. This Chlorobium luteolum (strain DSM 273 / BCRC 81028 / 2530) (Pelodictyon luteolum) protein is ATP-dependent protease subunit HslV.